Consider the following 224-residue polypeptide: Peroxiredoxin-like 2A (224 aa).

The interval 14–112 is thioredoxin fold; that stretch reads MWSVGLGAVG…SKLGVPLYAV (99 aa). A non-standard amino acid (selenocysteine) is located at residue Sec85. Cys88 (redox-active) is an active-site residue.

The protein belongs to the peroxiredoxin-like PRXL2 family. PRXL2A subfamily.

It is found in the cytoplasm. Involved in redox regulation of the cell. Acts as an antioxidant. Inhibits TNFSF11-induced NFKB1 and JUN activation and osteoclast differentiation. May affect bone resorption and help to maintain bone mass. This Gallus gallus (Chicken) protein is Peroxiredoxin-like 2A (PRXL2A).